Reading from the N-terminus, the 449-residue chain is 3-phosphoshikimate 1-carboxyvinyltransferase (449 aa).

3-phosphoshikimate is bound by residues K28, S29, and R33. Residue K28 coordinates phosphoenolpyruvate. G105 and R133 together coordinate phosphoenolpyruvate. Positions 179, 181, 332, and 359 each coordinate 3-phosphoshikimate. Residue Q181 participates in phosphoenolpyruvate binding. The active-site Proton acceptor is D332. 2 residues coordinate phosphoenolpyruvate: R363 and R406.

This sequence belongs to the EPSP synthase family. As to quaternary structure, monomer.

It is found in the cytoplasm. It carries out the reaction 3-phosphoshikimate + phosphoenolpyruvate = 5-O-(1-carboxyvinyl)-3-phosphoshikimate + phosphate. Its pathway is metabolic intermediate biosynthesis; chorismate biosynthesis; chorismate from D-erythrose 4-phosphate and phosphoenolpyruvate: step 6/7. Its function is as follows. Catalyzes the transfer of the enolpyruvyl moiety of phosphoenolpyruvate (PEP) to the 5-hydroxyl of shikimate-3-phosphate (S3P) to produce enolpyruvyl shikimate-3-phosphate and inorganic phosphate. This is 3-phosphoshikimate 1-carboxyvinyltransferase from Nitrobacter hamburgensis (strain DSM 10229 / NCIMB 13809 / X14).